We begin with the raw amino-acid sequence, 361 residues long: Phospho-N-acetylmuramoyl-pentapeptide-transferase (361 aa).

10 helical membrane-spanning segments follow: residues 25-45 (TGGA…WIID), 72-92 (TPTM…VLWA), 95-115 (LNPY…VGFY), 135-155 (LLIE…LGRG), 169-189 (VVLN…VGAG), 200-220 (GLAI…SYLV), 240-260 (LAVL…FNAP), 264-284 (IFMG…IAVA), 289-309 (IVLA…IVQV), and 338-358 (QIVI…LSTL).

The protein belongs to the glycosyltransferase 4 family. MraY subfamily. Mg(2+) is required as a cofactor.

The protein resides in the cell inner membrane. The catalysed reaction is UDP-N-acetyl-alpha-D-muramoyl-L-alanyl-gamma-D-glutamyl-meso-2,6-diaminopimeloyl-D-alanyl-D-alanine + di-trans,octa-cis-undecaprenyl phosphate = di-trans,octa-cis-undecaprenyl diphospho-N-acetyl-alpha-D-muramoyl-L-alanyl-D-glutamyl-meso-2,6-diaminopimeloyl-D-alanyl-D-alanine + UMP. The protein operates within cell wall biogenesis; peptidoglycan biosynthesis. In terms of biological role, catalyzes the initial step of the lipid cycle reactions in the biosynthesis of the cell wall peptidoglycan: transfers peptidoglycan precursor phospho-MurNAc-pentapeptide from UDP-MurNAc-pentapeptide onto the lipid carrier undecaprenyl phosphate, yielding undecaprenyl-pyrophosphoryl-MurNAc-pentapeptide, known as lipid I. In Rhodopseudomonas palustris (strain HaA2), this protein is Phospho-N-acetylmuramoyl-pentapeptide-transferase.